The chain runs to 148 residues: MVDFRHIVRVAGVDLDGNKQLRWALTAIKGVGINFATMVCRVAGLDPFMKAGYLTDEQVKKIEEILQDPVSHGIPRWAVNRPKDYETGKDLHLITAKLDMAIREDIMRLRRIRAYRGIRHELGLPVRGQRTRSNFRRGQTVGVSKKKK.

Belongs to the universal ribosomal protein uS13 family. Part of the 30S ribosomal subunit. Forms a loose heterodimer with protein S19. Forms two bridges to the 50S subunit in the 70S ribosome.

Functionally, located at the top of the head of the 30S subunit, it contacts several helices of the 16S rRNA. In the 70S ribosome it contacts the 23S rRNA (bridge B1a) and protein L5 of the 50S subunit (bridge B1b), connecting the 2 subunits; these bridges are implicated in subunit movement. This chain is Small ribosomal subunit protein uS13, found in Pyrococcus horikoshii (strain ATCC 700860 / DSM 12428 / JCM 9974 / NBRC 100139 / OT-3).